Reading from the N-terminus, the 217-residue chain is Nucleoside diphosphate kinase homolog 5 (217 aa).

Residues 18 to 151 are NDK; sequence ERTLALIKPD…REIRFMFPHS (134 aa).

It belongs to the NDK family.

It localises to the cell projection. The protein resides in the cilium. Its function is as follows. Functions as part of axonemal radial spoke complexes that play an important part in the motility of sperm and cilia. Does not seem to have nucleoside diphosphate kinase (NDPK) activity. Exhibits a 3'-5' exonuclease activity with a preference for single-stranded DNA, suggesting roles in DNA proofreading and repair. This is Nucleoside diphosphate kinase homolog 5 (nme5) from Danio rerio (Zebrafish).